A 349-amino-acid chain; its full sequence is Nuclear distribution protein nudE homolog 1-B (349 aa).

The stretch at 22-189 (VAMKYKQCSE…ELAVQQKQEK (168 aa)) forms a coiled coil.

This sequence belongs to the nudE family. As to quaternary structure, self-associates. Interacts with pafah1b1. Phosphorylated in mitosis.

It is found in the cytoplasm. It localises to the cytoskeleton. The protein resides in the microtubule organizing center. The protein localises to the centrosome. Its subcellular location is the spindle. It is found in the chromosome. It localises to the centromere. The protein resides in the kinetochore. The protein localises to the cleavage furrow. Its subcellular location is the cytoplasmic vesicle membrane. Its function is as follows. Required for centrosome duplication and formation and function of the mitotic spindle. The sequence is that of Nuclear distribution protein nudE homolog 1-B (nde1-b) from Xenopus laevis (African clawed frog).